A 336-amino-acid chain; its full sequence is Glutamyl endopeptidase (336 aa).

The N-terminal stretch at 1-29 is a signal peptide; that stretch reads MKGKFLKVSSLFVATLTTATLVSSPAANA. Residues 30-68 constitute a propeptide that is removed on maturation; that stretch reads LSSKAMDNHPQQTQSSKQQTPKIQKGGNLKPLEQREHAN. Residues 34 to 61 form a disordered region; that stretch reads AMDNHPQQTQSSKQQTPKIQKGGNLKPL. Residues 39-51 are compositionally biased toward low complexity; sequence PQQTQSSKQQTPK. Catalysis depends on charge relay system residues His119, Asp161, and Ser237. The disordered stretch occupies residues 283–336; sequence FANDDQPNNPDNPDNPNNPDNPNNPDEPNNPDNPNNPDNPDNGDNNNSDNPDAA. The span at 286-336 shows a compositional bias: low complexity; it reads DDQPNNPDNPDNPNNPDNPNNPDEPNNPDNPNNPDNPDNGDNNNSDNPDAA. 11 tandem repeats follow at residues 289 to 291, 292 to 294, 295 to 297, 298 to 300, 301 to 303, 304 to 306, 310 to 312, 313 to 315, 316 to 318, 319 to 321, and 322 to 324. The tract at residues 289 to 324 is 11 X 3 AA repeats of P-[DN]-N; it reads PNNPDNPDNPNNPDNPNNPDEPNNPDNPNNPDNPDN.

It belongs to the peptidase S1B family. In terms of processing, proteolytically cleaved by aureolysin (aur). This cleavage leads to the activation of SspA.

The protein resides in the secreted. The enzyme catalyses Preferential cleavage: Glu-|-Xaa, Asp-|-Xaa.. Functionally, preferentially cleaves peptide bonds on the carboxyl-terminal side of aspartate and glutamate. Along with other extracellular proteases it is involved in colonization and infection of human tissues. Required for proteolytic maturation of thiol protease SspB and inactivation of SspC, an inhibitor of SspB. It is the most important protease for degradation of fibronectin-binding protein (FnBP) and surface protein A, which are involved in adherence to host cells. May also protect bacteria against host defense mechanism by cleaving the immunoglobulin classes IgG, IgA and IgM. May be involved in the stability of secreted lipases. This chain is Glutamyl endopeptidase (sspA), found in Staphylococcus aureus (strain NCTC 8325 / PS 47).